Reading from the N-terminus, the 475-residue chain is Aspartyl/glutamyl-tRNA(Asn/Gln) amidotransferase subunit B (475 aa).

This sequence belongs to the GatB/GatE family. GatB subfamily. Heterotrimer of A, B and C subunits.

The catalysed reaction is L-glutamyl-tRNA(Gln) + L-glutamine + ATP + H2O = L-glutaminyl-tRNA(Gln) + L-glutamate + ADP + phosphate + H(+). It carries out the reaction L-aspartyl-tRNA(Asn) + L-glutamine + ATP + H2O = L-asparaginyl-tRNA(Asn) + L-glutamate + ADP + phosphate + 2 H(+). In terms of biological role, allows the formation of correctly charged Asn-tRNA(Asn) or Gln-tRNA(Gln) through the transamidation of misacylated Asp-tRNA(Asn) or Glu-tRNA(Gln) in organisms which lack either or both of asparaginyl-tRNA or glutaminyl-tRNA synthetases. The reaction takes place in the presence of glutamine and ATP through an activated phospho-Asp-tRNA(Asn) or phospho-Glu-tRNA(Gln). This chain is Aspartyl/glutamyl-tRNA(Asn/Gln) amidotransferase subunit B, found in Helicobacter pylori (strain HPAG1).